The following is a 544-amino-acid chain: Methyl-accepting chemotaxis protein McpP (544 aa).

3 helical membrane-spanning segments follow: residues 12 to 32, 50 to 70, and 192 to 212; these read RLWL…LLML, VVQT…AGTL, and DASL…MLIA. In terms of domain architecture, HAMP spans 213–267; the sequence is RSIARPLQEAVQAMGNIASGESDLTRRLDTHGSDEITHLGEHFNRFNGKLQGVVG. In terms of domain architecture, Methyl-accepting transducer spans 272–508; the sequence is AAHALAQSAG…EINRNVLDTA (237 aa).

This sequence belongs to the methyl-accepting chemotaxis (MCP) protein family.

The protein resides in the cell membrane. Its function is as follows. Chemotactic-signal transducers respond to changes in the concentration of attractants and repellents in the environment, transduce a signal from the outside to the inside of the cell, and facilitate sensory adaptation through the variation of the level of methylation. McpP is a chemoreceptor that responds specifically to some C2 and C3 carboxylic acids. Recognizes acetate, pyruvate, propionate, and L-lactate. This Pseudomonas putida (strain ATCC 47054 / DSM 6125 / CFBP 8728 / NCIMB 11950 / KT2440) protein is Methyl-accepting chemotaxis protein McpP.